Reading from the N-terminus, the 329-residue chain is 4-hydroxythreonine-4-phosphate dehydrogenase (329 aa).

Positions 136 and 137 each coordinate substrate. A divalent metal cation-binding residues include H166, H211, and H266. Residues K274, N283, and R292 each contribute to the substrate site.

Belongs to the PdxA family. As to quaternary structure, homodimer. The cofactor is Zn(2+). Mg(2+) serves as cofactor. Co(2+) is required as a cofactor.

It is found in the cytoplasm. The enzyme catalyses 4-(phosphooxy)-L-threonine + NAD(+) = 3-amino-2-oxopropyl phosphate + CO2 + NADH. The protein operates within cofactor biosynthesis; pyridoxine 5'-phosphate biosynthesis; pyridoxine 5'-phosphate from D-erythrose 4-phosphate: step 4/5. In terms of biological role, catalyzes the NAD(P)-dependent oxidation of 4-(phosphooxy)-L-threonine (HTP) into 2-amino-3-oxo-4-(phosphooxy)butyric acid which spontaneously decarboxylates to form 3-amino-2-oxopropyl phosphate (AHAP). The polypeptide is 4-hydroxythreonine-4-phosphate dehydrogenase (Citrobacter koseri (strain ATCC BAA-895 / CDC 4225-83 / SGSC4696)).